The primary structure comprises 328 residues: L-lactate dehydrogenase (328 aa).

NAD(+) is bound by residues Val18, Glu39, Lys46, Tyr71, and 85 to 86; that span reads GA. Substrate is bound by residues Gln88 and Arg94. NAD(+) is bound by residues Ser107, 124-126, and Ser149; that span reads AAN. 126–129 is a binding site for substrate; sequence NPVD. 154-157 is a substrate binding site; it reads DSAR. Beta-D-fructose 1,6-bisphosphate-binding residues include Arg159 and His174. His181 serves as the catalytic Proton acceptor. Tyr226 carries the phosphotyrosine modification. Thr235 contacts substrate.

The protein belongs to the LDH/MDH superfamily. LDH family. As to quaternary structure, homotetramer.

The protein resides in the cytoplasm. It catalyses the reaction (S)-lactate + NAD(+) = pyruvate + NADH + H(+). The protein operates within fermentation; pyruvate fermentation to lactate; (S)-lactate from pyruvate: step 1/1. With respect to regulation, allosterically activated by fructose 1,6-bisphosphate (FBP). In terms of biological role, catalyzes the conversion of lactate to pyruvate. The protein is L-lactate dehydrogenase of Streptococcus gordonii (strain Challis / ATCC 35105 / BCRC 15272 / CH1 / DL1 / V288).